Reading from the N-terminus, the 283-residue chain is Probable endonuclease 4 (283 aa).

9 residues coordinate Zn(2+): histidine 69, histidine 109, glutamate 144, aspartate 178, histidine 181, histidine 215, aspartate 228, histidine 230, and glutamate 260.

It belongs to the AP endonuclease 2 family. Requires Zn(2+) as cofactor.

It carries out the reaction Endonucleolytic cleavage to 5'-phosphooligonucleotide end-products.. Endonuclease IV plays a role in DNA repair. It cleaves phosphodiester bonds at apurinic or apyrimidinic (AP) sites, generating a 3'-hydroxyl group and a 5'-terminal sugar phosphate. The polypeptide is Probable endonuclease 4 (Thermosipho melanesiensis (strain DSM 12029 / CIP 104789 / BI429)).